The chain runs to 159 residues: Ribosomal RNA large subunit methyltransferase H (159 aa).

Residues leucine 76, glycine 108, and 127–132 (FSKMTF) contribute to the S-adenosyl-L-methionine site.

This sequence belongs to the RNA methyltransferase RlmH family. As to quaternary structure, homodimer.

It is found in the cytoplasm. It catalyses the reaction pseudouridine(1915) in 23S rRNA + S-adenosyl-L-methionine = N(3)-methylpseudouridine(1915) in 23S rRNA + S-adenosyl-L-homocysteine + H(+). Functionally, specifically methylates the pseudouridine at position 1915 (m3Psi1915) in 23S rRNA. The protein is Ribosomal RNA large subunit methyltransferase H of Clostridium botulinum (strain Alaska E43 / Type E3).